An 835-amino-acid polypeptide reads, in one-letter code: Protein translocase subunit SecA (835 aa).

Residues glutamine 85, 103-107, and aspartate 492 each bind ATP; that span reads GEGKT. Residues 788-807 are disordered; sequence VQGEAVHPSSDGEEAKKKPV. 4 residues coordinate Zn(2+): cysteine 819, cysteine 821, cysteine 830, and cysteine 831.

It belongs to the SecA family. In terms of assembly, monomer and homodimer. Part of the essential Sec protein translocation apparatus which comprises SecA, SecYEG and auxiliary proteins SecDF. Other proteins may also be involved. Zn(2+) is required as a cofactor.

The protein resides in the cell membrane. The protein localises to the cytoplasm. The enzyme catalyses ATP + H2O + cellular proteinSide 1 = ADP + phosphate + cellular proteinSide 2.. Its function is as follows. Part of the Sec protein translocase complex. Interacts with the SecYEG preprotein conducting channel. Has a central role in coupling the hydrolysis of ATP to the transfer of proteins into and across the cell membrane, serving as an ATP-driven molecular motor driving the stepwise translocation of polypeptide chains across the membrane. This chain is Protein translocase subunit SecA, found in Bacillus cereus (strain ATCC 10987 / NRS 248).